Reading from the N-terminus, the 1406-residue chain is DNA-directed RNA polymerase subunit beta' (1406 aa).

4 residues coordinate Zn(2+): Cys-70, Cys-72, Cys-85, and Cys-88. Mg(2+) contacts are provided by Asp-460, Asp-462, and Asp-464. Residues Cys-814, Cys-888, Cys-895, and Cys-898 each contribute to the Zn(2+) site.

This sequence belongs to the RNA polymerase beta' chain family. As to quaternary structure, the RNAP catalytic core consists of 2 alpha, 1 beta, 1 beta' and 1 omega subunit. When a sigma factor is associated with the core the holoenzyme is formed, which can initiate transcription. It depends on Mg(2+) as a cofactor. Requires Zn(2+) as cofactor.

The catalysed reaction is RNA(n) + a ribonucleoside 5'-triphosphate = RNA(n+1) + diphosphate. Its function is as follows. DNA-dependent RNA polymerase catalyzes the transcription of DNA into RNA using the four ribonucleoside triphosphates as substrates. This is DNA-directed RNA polymerase subunit beta' from Yersinia pseudotuberculosis serotype O:1b (strain IP 31758).